Here is an 87-residue protein sequence, read N- to C-terminus: MAKEELLELDGIVDEVLPDSKYRVTLENGVVVGAYASGRMRKNHIRILAGDRVTLELSVYDLTKGRINFRHKDANSPRPPRTGQPRR.

The S1-like domain occupies 1–72; it reads MAKEELLELD…TKGRINFRHK (72 aa). The segment at 68–87 is disordered; it reads NFRHKDANSPRPPRTGQPRR. The span at 77–87 shows a compositional bias: pro residues; sequence PRPPRTGQPRR.

This sequence belongs to the IF-1 family. Component of the 30S ribosomal translation pre-initiation complex which assembles on the 30S ribosome in the order IF-2 and IF-3, IF-1 and N-formylmethionyl-tRNA(fMet); mRNA recruitment can occur at any time during PIC assembly.

Its subcellular location is the cytoplasm. In terms of biological role, one of the essential components for the initiation of protein synthesis. Stabilizes the binding of IF-2 and IF-3 on the 30S subunit to which N-formylmethionyl-tRNA(fMet) subsequently binds. Helps modulate mRNA selection, yielding the 30S pre-initiation complex (PIC). Upon addition of the 50S ribosomal subunit IF-1, IF-2 and IF-3 are released leaving the mature 70S translation initiation complex. The chain is Translation initiation factor IF-1 1 from Burkholderia lata (strain ATCC 17760 / DSM 23089 / LMG 22485 / NCIMB 9086 / R18194 / 383).